Consider the following 370-residue polypeptide: Aspartate-semialdehyde dehydrogenase 1 (370 aa).

Residues 9–12 (RGMV), 36–37 (TS), and Q72 each bind NADP(+). R101 contacts phosphate. C134 serves as the catalytic Acyl-thioester intermediate. The residue at position 134 (C134) is an S-cysteinyl cysteine; in inhibited form. Q161 provides a ligand contact to substrate. Residues 164-165 (SG) and P192 contribute to the NADP(+) site. E240 serves as a coordination point for substrate. K243 contacts phosphate. Residue R267 coordinates substrate. H274 serves as the catalytic Proton acceptor. NADP(+) is bound at residue Q350.

This sequence belongs to the aspartate-semialdehyde dehydrogenase family. As to quaternary structure, homodimer.

The enzyme catalyses L-aspartate 4-semialdehyde + phosphate + NADP(+) = 4-phospho-L-aspartate + NADPH + H(+). It participates in amino-acid biosynthesis; L-lysine biosynthesis via DAP pathway; (S)-tetrahydrodipicolinate from L-aspartate: step 2/4. It functions in the pathway amino-acid biosynthesis; L-methionine biosynthesis via de novo pathway; L-homoserine from L-aspartate: step 2/3. The protein operates within amino-acid biosynthesis; L-threonine biosynthesis; L-threonine from L-aspartate: step 2/5. Inhibited by S-methyl-L-cysteine sulfoxide in vitro, via the formation of a covalently bound cysteine at the active site Cys-134. Its function is as follows. Catalyzes the NADPH-dependent formation of L-aspartate-semialdehyde (L-ASA) by the reductive dephosphorylation of L-aspartyl-4-phosphate. The sequence is that of Aspartate-semialdehyde dehydrogenase 1 (asd1) from Vibrio cholerae serotype O1 (strain ATCC 39315 / El Tor Inaba N16961).